Reading from the N-terminus, the 486-residue chain is Glutamyl-tRNA(Gln) amidotransferase subunit A (486 aa).

Catalysis depends on charge relay system residues Lys-74 and Ser-149. The Acyl-ester intermediate role is filled by Ser-173.

This sequence belongs to the amidase family. GatA subfamily. As to quaternary structure, heterotrimer of A, B and C subunits.

It catalyses the reaction L-glutamyl-tRNA(Gln) + L-glutamine + ATP + H2O = L-glutaminyl-tRNA(Gln) + L-glutamate + ADP + phosphate + H(+). In terms of biological role, allows the formation of correctly charged Gln-tRNA(Gln) through the transamidation of misacylated Glu-tRNA(Gln) in organisms which lack glutaminyl-tRNA synthetase. The reaction takes place in the presence of glutamine and ATP through an activated gamma-phospho-Glu-tRNA(Gln). The chain is Glutamyl-tRNA(Gln) amidotransferase subunit A from Prochlorococcus marinus (strain SARG / CCMP1375 / SS120).